We begin with the raw amino-acid sequence, 367 residues long: Uracil nucleotide/cysteinyl leukotriene receptor (367 aa).

The tract at residues 1-28 (MSKRSWWAGSRKPPREMLKLSGSDSSQS) is disordered. Residues 1–64 (MSKRSWWAGS…TPLENMLFAS (64 aa)) are Extracellular-facing. Asn-42 carries N-linked (GlcNAc...) asparagine glycosylation. Residues 65-85 (FYLLDFILALVGNTLALWLFI) traverse the membrane as a helical segment. The Cytoplasmic portion of the chain corresponds to 86 to 92 (RDHKSGT). Residues 93–113 (PANVFLMHLAVADLSCVLVLP) form a helical membrane-spanning segment. Over 114-133 (TRLVYHFSGNHWPFGEIACR) the chain is Extracellular. A disulfide bridge links Cys-132 with Cys-209. Residues 134-154 (LTGFLFYLNMYASIYFLTCIS) traverse the membrane as a helical segment. Residues 155 to 175 (ADRFLAIVHPVKSLKLRRPLY) lie on the Cytoplasmic side of the membrane. The chain crosses the membrane as a helical span at residues 176 to 196 (AHLACAFLWVVVAVAMAPLLV). Residues 197-223 (SPQTVQTNHTVVCLQLYREKASHHALV) lie on the Extracellular side of the membrane. A glycan (N-linked (GlcNAc...) asparagine) is linked at Asn-204. A helical membrane pass occupies residues 224-244 (SLAVAFTFPFITTVTCYLLII). Topologically, residues 245–260 (RSLRQGLRVEKRLKTK) are cytoplasmic. Residues 261–281 (AVRMIAIVLAIFLVCFVPYHV) form a helical membrane-spanning segment. N-linked (GlcNAc...) asparagine glycosylation is present at Asn-282. Residues 282–308 (NRSVYVLHYRSHGASCATQRILALANR) are Extracellular-facing. Residues 309–329 (ITSCLTSLNGALDPIMYFFVA) traverse the membrane as a helical segment. Residues 330-367 (EKFRHALCNLLCGKRLKGPPPSFEGKTNESSLSAKSEL) lie on the Cytoplasmic side of the membrane.

This sequence belongs to the G-protein coupled receptor 1 family. As to expression, expressed in brain, kidney, heart and umbilical vein endothelial cells. Highest level in brain.

The protein localises to the cell membrane. In terms of biological role, dual specificity receptor for uracil nucleotides and cysteinyl leukotrienes (CysLTs). Signals through G(i) and inhibition of adenylyl cyclase. May mediate brain damage by nucleotides and CysLTs following ischemia. The sequence is that of Uracil nucleotide/cysteinyl leukotriene receptor (GPR17) from Homo sapiens (Human).